The primary structure comprises 136 residues: Small ribosomal subunit protein uS11c (136 aa).

Belongs to the universal ribosomal protein uS11 family. As to quaternary structure, part of the 30S ribosomal subunit.

The protein resides in the plastid. It is found in the chloroplast. In Guizotia abyssinica (Niger), this protein is Small ribosomal subunit protein uS11c.